The chain runs to 799 residues: MSQAGRDGGDSCYRLRCSLLGHELDVRGVARCPLWPGEGFVSVSRDRSSRLWVPDSPNRGFIELQRMSGHSNFVSCVCILPPSDLYPRGLIATGGNDQNICVFSLDSEKPLYTLKGHKNTVCSLSSGKFGTLLSGSWDTTGKVWLNDKCMMTLQGHTAAVWAVKILPEQGLMLTGSADKSIKLWKAGRCEMTFLGHEDCVRGLATINDTEFLSCSNDASVRRWLITGECLQIYYGHTNYIYSVCLFPNSQDFVTTSEDRSIRIWRKGECTQTIRLPAQSVWCCCVLDNGDIVVGASDGIIRVFTESPDRIASIEEIQAFENELSKATIDPKTGDLGDIKIDDLPGRDHLNEPGTRDGQTRLIKEDGKVEAYQWSTGEGRWMKIGDVVGSSGATQQTSGRVLFEGKEYDYVFTIDVNESGPSHKLPYNLTEDPWLVAYNFLQKNDLNPMFLDQVAKFIIDNTAGQTPSTNLGYTDPLTGGGRYIPGSSSTDNNGADPFTGGNRYVPGSSLQSDYSAAAADPFTGKNAYRSSTAPTPNAYFPKTKPVTFDQANPSQILGKLKELNESAPEERKLPEEDLMQLDKLLSVAVNPSGGTVTAQQLDTLWRVVNWPEDLIFPALDVLRISIKNPTVNEMFCNEKEGSQFSSYLLQLMSPSGKQANQLLALRTFCNSFFCDPGSCLLMVERDNVLSKVIELKTVNNKNIHIALATLMLNYAICLHKVSDIEGKAQCLSAISSVIEVVQDLEAIFRLLVALGTLISGDTNAMQLAKSLGVDSQIKKYMSVTEPAKVNECCRLLLNML.

WD repeat units lie at residues 21 to 62 (GHEL…RGFI), 69 to 113 (GHSN…PLYT), 116 to 154 (GHKN…MTLQ), 155 to 194 (GHTA…MTFL), 196 to 233 (HEDC…LQIY), 235 to 274 (GHTN…QTIR), and 276 to 314 (PAQS…ASIE). The region spanning 372 to 471 (QWSTGEGRWM…AGQTPSTNLG (100 aa)) is the PFU domain. The PUL domain occupies 537 to 798 (AYFPKTKPVT…NECCRLLLNM (262 aa)). ARM repeat units follow at residues 550 to 592 (ANPS…NPSG), 593 to 624 (GTVT…LRIS), 625 to 673 (IKNP…SFFC), 674 to 719 (DPGS…CLHK), 720 to 759 (VSDI…LISG), and 760 to 799 (DTNA…LNML).

It belongs to the WD repeat PLAP family.

The protein resides in the nucleus. The protein localises to the cytoplasm. Its subcellular location is the synapse. In terms of biological role, plays a role in protein ubiquitination, sorting and degradation through its association with VCP. Involved in ubiquitin-mediated membrane proteins trafficking to late endosomes in an ESCRT-dependent manner, and hence plays a role in synaptic vesicle recycling. May play a role in macroautophagy, regulating for instance the clearance of damaged lysosomes. Plays a role in cerebellar Purkinje cell development. Positively regulates cytosolic and calcium-independent phospholipase A2 activities in a tumor necrosis factor alpha (TNF-alpha)- or lipopolysaccharide (LPS)-dependent manner, and hence prostaglandin E2 biosynthesis. The chain is Phospholipase A-2-activating protein (plaa) from Xenopus laevis (African clawed frog).